Here is a 156-residue protein sequence, read N- to C-terminus: MNIIEAAVATPDARVAITIARFNNFINDSLLDGAIDALKRIGQVKDENITVVWVPGAYELPLAAGALAKTGKYDAVIALGTVIRGGTAHFEYVAGGASNGLAHVAQEAEIPVAFGVLTTESIEQAIERAGTKAGNKGAEAALTALEMINVLKAIKA.

Residues Phe22, 57–59, and 81–83 contribute to the 5-amino-6-(D-ribitylamino)uracil site; these read AYE and TVI. Residue 86-87 coordinates (2S)-2-hydroxy-3-oxobutyl phosphate; the sequence is GT. His89 acts as the Proton donor in catalysis. Residue Phe114 participates in 5-amino-6-(D-ribitylamino)uracil binding. Residue Arg128 participates in (2S)-2-hydroxy-3-oxobutyl phosphate binding.

It belongs to the DMRL synthase family. Forms an icosahedral capsid composed of 60 subunits, arranged as a dodecamer of pentamers.

The enzyme catalyses (2S)-2-hydroxy-3-oxobutyl phosphate + 5-amino-6-(D-ribitylamino)uracil = 6,7-dimethyl-8-(1-D-ribityl)lumazine + phosphate + 2 H2O + H(+). It functions in the pathway cofactor biosynthesis; riboflavin biosynthesis; riboflavin from 2-hydroxy-3-oxobutyl phosphate and 5-amino-6-(D-ribitylamino)uracil: step 1/2. Catalyzes the formation of 6,7-dimethyl-8-ribityllumazine by condensation of 5-amino-6-(D-ribitylamino)uracil with 3,4-dihydroxy-2-butanone 4-phosphate. This is the penultimate step in the biosynthesis of riboflavin. The protein is 6,7-dimethyl-8-ribityllumazine synthase of Enterobacter sp. (strain 638).